Consider the following 305-residue polypeptide: Dihydroorotate dehydrogenase A (fumarate) (305 aa).

Residues Ser-21 and 45–46 contribute to the FMN site; that span reads KS. Substrate contacts are provided by residues Lys-45, 69-73, and Asn-129; that span reads NAIGL. Position 129 (Asn-129) interacts with FMN. Residue Cys-132 is the Nucleophile of the active site. 2 residues coordinate FMN: Lys-167 and Ile-193. 194–195 contacts substrate; that stretch reads NT. FMN is bound by residues Gly-219 and 245–246; that span reads GG.

It belongs to the dihydroorotate dehydrogenase family. Type 1 subfamily. In terms of assembly, homodimer. The cofactor is FMN.

It is found in the cytoplasm. It catalyses the reaction (S)-dihydroorotate + fumarate = orotate + succinate. It functions in the pathway pyrimidine metabolism; UMP biosynthesis via de novo pathway. Its function is as follows. Catalyzes the conversion of dihydroorotate to orotate with fumarate as the electron acceptor. This is Dihydroorotate dehydrogenase A (fumarate) (pyrD) from Lactiplantibacillus plantarum (strain ATCC BAA-793 / NCIMB 8826 / WCFS1) (Lactobacillus plantarum).